The following is a 339-amino-acid chain: Anthranilate phosphoribosyltransferase (339 aa).

5-phospho-alpha-D-ribose 1-diphosphate is bound by residues glycine 80, 83 to 84, 90 to 93, 108 to 116, and serine 120; these read GD, NVST, and KHGNRSVTS. Position 80 (glycine 80) interacts with anthranilate. Residue serine 92 participates in Mg(2+) binding. An anthranilate-binding site is contributed by asparagine 111. Residue arginine 166 participates in anthranilate binding. Residues aspartate 225 and glutamate 226 each contribute to the Mg(2+) site.

This sequence belongs to the anthranilate phosphoribosyltransferase family. As to quaternary structure, homodimer. Mg(2+) serves as cofactor.

The enzyme catalyses N-(5-phospho-beta-D-ribosyl)anthranilate + diphosphate = 5-phospho-alpha-D-ribose 1-diphosphate + anthranilate. It participates in amino-acid biosynthesis; L-tryptophan biosynthesis; L-tryptophan from chorismate: step 2/5. Functionally, catalyzes the transfer of the phosphoribosyl group of 5-phosphorylribose-1-pyrophosphate (PRPP) to anthranilate to yield N-(5'-phosphoribosyl)-anthranilate (PRA). This Ignicoccus hospitalis (strain KIN4/I / DSM 18386 / JCM 14125) protein is Anthranilate phosphoribosyltransferase.